We begin with the raw amino-acid sequence, 418 residues long: Serine hydroxymethyltransferase (418 aa).

Residues Leu121 and 125–127 (GHL) contribute to the (6S)-5,6,7,8-tetrahydrofolate site. Lys230 is subject to N6-(pyridoxal phosphate)lysine. Residues Glu246 and 355 to 357 (SPF) contribute to the (6S)-5,6,7,8-tetrahydrofolate site.

Belongs to the SHMT family. As to quaternary structure, homodimer. Pyridoxal 5'-phosphate serves as cofactor.

It localises to the cytoplasm. The catalysed reaction is (6R)-5,10-methylene-5,6,7,8-tetrahydrofolate + glycine + H2O = (6S)-5,6,7,8-tetrahydrofolate + L-serine. The protein operates within one-carbon metabolism; tetrahydrofolate interconversion. Its pathway is amino-acid biosynthesis; glycine biosynthesis; glycine from L-serine: step 1/1. Catalyzes the reversible interconversion of serine and glycine with tetrahydrofolate (THF) serving as the one-carbon carrier. This reaction serves as the major source of one-carbon groups required for the biosynthesis of purines, thymidylate, methionine, and other important biomolecules. Also exhibits THF-independent aldolase activity toward beta-hydroxyamino acids, producing glycine and aldehydes, via a retro-aldol mechanism. The chain is Serine hydroxymethyltransferase from Streptococcus pneumoniae (strain Taiwan19F-14).